The chain runs to 286 residues: MKNDNGQQLSLTQALDLLKSRQGKNFKTADKIIENFCFYDYSNIIMKYDYKSGKKRILNILNSELDVENLNELPCDEKLTFSNAYYSWVTAIFVDIRKSTELFTNENKKDVSRLIRSFTSEIIEIINQGDNLREIGIRGDCVYGIFTTPKKSQINEVFDMACYVNTMIKMLNKLLIKEDIPQIMVGIGVSSAQELVVKAGRKGSGVNNKVWIGDAVTKAANMSGKGNKNHNLPIIISELTYKNLNDHNKGLMSSRKYNDDLDYYYDCDLIISAFNDWINKGMLDNE.

A Guanylate cyclase domain is found at 90–223; the sequence is TAIFVDIRKS…DAVTKAANMS (134 aa). Phe93 provides a ligand contact to a ribonucleoside 5'-triphosphate. Mn(2+)-binding residues include Asp95, Ile96, and Asp140.

This sequence belongs to the adenylyl cyclase class-4/guanylyl cyclase family. Pyrimidine cyclase subfamily. In terms of assembly, homodimer. Mn(2+) serves as cofactor.

It localises to the cytoplasm. The catalysed reaction is UTP = 3',5'-cyclic UMP + diphosphate. In terms of biological role, pycsar (pyrimidine cyclase system for antiphage resistance) provides immunity against bacteriophage. The pyrimidine cyclase (PycC) synthesizes cyclic nucleotides in response to infection; these serve as specific second messenger signals. The signals activate the adjacent effector, leading to bacterial cell death and abortive phage infection. A clade C Pycsar system. The pyrimidine cyclase gene of a two-gene Pycsar system, weakly generates cyclic UMP (cUMP) from UTP, has little to no activity on ATP, CTP or GTP. Expression of this and adjacent effector TpPycTM (AC A0A1T4LJG1) probably confers resistance to bacteriophage. The genes are probably only expressed in response to bacteriophage infection. This chain is Uridylate cyclase, found in Treponema porcinum.